We begin with the raw amino-acid sequence, 619 residues long: Kinesin light chain 4 (619 aa).

Serine 2 is subject to N-acetylserine. The stretch at 32–150 (GLESLHSEHQ…EEEKKHLEFL (119 aa)) forms a coiled coil. Residues 55–88 (QQGGHEEGLVHEKARQLRRSMENIELGLSEAQVM) form a TPR 1 repeat. Basic and acidic residues predominate over residues 156-175 (YDEDGHSMEEKEGDASKDSL). The interval 156-200 (YDEDGHSMEEKEGDASKDSLDDLFPNEEEEDSSNDLSRGQGAAAA) is disordered. Serine 174 bears the Phosphoserine mark. Positions 179–188 (FPNEEEEDSS) are enriched in acidic residues. TPR repeat units lie at residues 211–244 (LRTL…LERT), 253–286 (ATML…REST), 295–328 (AATL…REKV), 337–370 (AKQL…YERQ), and 379–412 (ARTK…AHVQ). Serine 460 is modified (phosphoserine). The TPR 7 repeat unit spans residues 464–497 (NTTLRNLGALYRRQGKLEAAETLEECALRSRKQG). Serine 565, serine 566, and serine 590 each carry phosphoserine. Positions 571–619 (RKLQGTEPRPSSSNMKRAASLNYLNQPNAAPLQTSRGLSASTVDLSSSS) are disordered. Polar residues predominate over residues 592-608 (NYLNQPNAAPLQTSRGL). Residues 609 to 619 (SASTVDLSSSS) show a composition bias toward low complexity. Residue threonine 612 is modified to Phosphothreonine.

This sequence belongs to the kinesin light chain family. In terms of assembly, oligomeric complex composed of two heavy chains and two light chains.

It localises to the cytoplasm. It is found in the cytoskeleton. Its function is as follows. Kinesin is a microtubule-associated force-producing protein that may play a role in organelle transport. The light chain may function in coupling of cargo to the heavy chain or in the modulation of its ATPase activity. This chain is Kinesin light chain 4 (Klc4), found in Rattus norvegicus (Rat).